The primary structure comprises 788 residues: LPS-assembly protein LptD (788 aa).

A signal peptide spans 1–24 (MKKRFPTLLATLIWTALYSQHTLA).

This sequence belongs to the LptD family. As to quaternary structure, component of the lipopolysaccharide transport and assembly complex. Interacts with LptE and LptA.

The protein resides in the cell outer membrane. In terms of biological role, together with LptE, is involved in the assembly of lipopolysaccharide (LPS) at the surface of the outer membrane. This chain is LPS-assembly protein LptD, found in Yersinia enterocolitica serotype O:8 / biotype 1B (strain NCTC 13174 / 8081).